The following is a 333-amino-acid chain: Diacylglycerol acyltransferase/mycolyltransferase Ag85C (333 aa).

Residues 1–44 form the signal peptide; that stretch reads MKFLQQMRKLFGLAAKFPARLTIAVIGTALLAGLVGVVGDTAIA. 86–87 is a binding site for substrate; it reads LR. Residues 102-112 form a fibronectin-binding region; sequence FEEYYHSGLSV. 2 residues coordinate substrate: Ser-170 and Asn-198. Residue Ser-170 is the Nucleophile of the active site. The active site involves Glu-274. Substrate is bound by residues 276-279 and 306-308; these read LTLS and HSW. Residue His-306 is part of the active site.

The protein belongs to the mycobacterial A85 antigen family. As to quaternary structure, homodimer.

It is found in the secreted. The catalysed reaction is an acyl-CoA + a 1,2-diacyl-sn-glycerol = a triacyl-sn-glycerol + CoA. It carries out the reaction 2 alpha,alpha'-trehalose 6-mycolate = alpha,alpha'-trehalose 6,6'-bismycolate + alpha,alpha-trehalose. In terms of biological role, the antigen 85 proteins (FbpA, FbpB, FbpC) are responsible for the high affinity of mycobacteria to fibronectin, a large adhesive glycoprotein, which facilitates the attachment of M.tuberculosis to murine alveolar macrophages (AMs). They also help to maintain the integrity of the cell wall by catalyzing the transfer of mycolic acids to cell wall arabinogalactan and through the synthesis of alpha,alpha-trehalose dimycolate (TDM, cord factor). They catalyze the transfer of a mycoloyl residue from one molecule of alpha,alpha-trehalose monomycolate (TMM) to another TMM, leading to the formation of TDM. This is Diacylglycerol acyltransferase/mycolyltransferase Ag85C (fbpC) from Mycobacterium leprae (strain TN).